Consider the following 470-residue polypeptide: Pyruvate kinase I (470 aa).

Substrate is bound at residue Arg32. Residues Asn34, Ser36, Asp66, and Thr67 each coordinate K(+). 34 to 37 contacts ATP; sequence NFSH. ATP is bound by residues Arg73 and Lys156. A substrate-binding site is contributed by Lys220. Mg(2+) is bound at residue Glu222. The substrate site is built by Gly245, Asp246, and Thr278. Asp246 is a Mg(2+) binding site.

The protein belongs to the pyruvate kinase family. As to quaternary structure, homotetramer. It depends on Mg(2+) as a cofactor. K(+) serves as cofactor.

It catalyses the reaction pyruvate + ATP = phosphoenolpyruvate + ADP + H(+). The protein operates within carbohydrate degradation; glycolysis; pyruvate from D-glyceraldehyde 3-phosphate: step 5/5. With respect to regulation, belongs to type I PK; fructose 1,6-bisphosphate-activated. Its function is as follows. Catalyzes the formation of pyruvate in the last step of glycolysis, it is irreversible under physiological conditions. The reaction is critical for the control of metabolic flux in the second part of glycolysis. This chain is Pyruvate kinase I (pykF), found in Salmonella typhimurium (strain LT2 / SGSC1412 / ATCC 700720).